A 247-amino-acid chain; its full sequence is 2,5-diamino-6-ribosylamino-4(3H)-pyrimidinone 5'-phosphate reductase (247 aa).

NADP(+)-binding positions include Thr75, Asp79, Gly165, and 187-191; that span reads GASII.

Belongs to the HTP reductase family. As to quaternary structure, homodimer.

It catalyses the reaction 2,5-diamino-6-(1-D-ribitylamino)pyrimidin-4(3H)-one 5'-phosphate + NADP(+) = 2,5-diamino-6-(1-D-ribosylamino)pyrimidin-4(3H)-one 5'-phosphate + NADPH + H(+). It carries out the reaction 2,5-diamino-6-(1-D-ribitylamino)pyrimidin-4(3H)-one 5'-phosphate + NAD(+) = 2,5-diamino-6-(1-D-ribosylamino)pyrimidin-4(3H)-one 5'-phosphate + NADH + H(+). It functions in the pathway cofactor biosynthesis; riboflavin biosynthesis. Catalyzes an early step in riboflavin biosynthesis, the NADPH-dependent reduction of the ribose side chain of 2,5-diamino-6-ribosylamino-4(3H)-pyrimidinone 5'-phosphate, yielding 2,5-diamino-6-ribitylamino-4(3H)-pyrimidinone 5'-phosphate. This chain is 2,5-diamino-6-ribosylamino-4(3H)-pyrimidinone 5'-phosphate reductase (RIB7), found in Debaryomyces hansenii (strain ATCC 36239 / CBS 767 / BCRC 21394 / JCM 1990 / NBRC 0083 / IGC 2968) (Yeast).